Consider the following 410-residue polypeptide: Aminopeptidase AmpS (410 aa).

E250, E316, E340, H345, H378, and D380 together coordinate a divalent metal cation.

The protein belongs to the peptidase M29 family. Requires Co(2+) as cofactor. Zn(2+) is required as a cofactor. Mg(2+) serves as cofactor.

Metal-dependent exopeptidase. The sequence is that of Aminopeptidase AmpS (ampS) from Bacillus subtilis (strain 168).